The following is a 216-amino-acid chain: Cytidylate kinase (216 aa).

7–15 contacts ATP; the sequence is GPAGTGKST.

This sequence belongs to the cytidylate kinase family. Type 1 subfamily.

It localises to the cytoplasm. It catalyses the reaction CMP + ATP = CDP + ADP. It carries out the reaction dCMP + ATP = dCDP + ADP. The polypeptide is Cytidylate kinase (Chlamydia muridarum (strain MoPn / Nigg)).